An 802-amino-acid polypeptide reads, in one-letter code: Aldehyde dehydrogenase family 16 member A1 (802 aa).

A disordered region spans residues 513 to 554 (SLPSGPETGPSPAPPYGLFVRGRFQSPGTQSSRPIKDSSGKV).

Belongs to the aldehyde dehydrogenase family. As to quaternary structure, interacts with SPG21.

The chain is Aldehyde dehydrogenase family 16 member A1 (Aldh16a1) from Rattus norvegicus (Rat).